The following is a 462-amino-acid chain: Protoheme IX farnesyltransferase, mitochondrial (462 aa).

A mitochondrion-targeting transit peptide spans methionine 1–glutamine 30. 7 helical membrane-spanning segments follow: residues threonine 158–valine 178, leucine 234–leucine 254, isoleucine 274–alanine 294, leucine 298–phenylalanine 318, tyrosine 352–tyrosine 372, tyrosine 373–tryptophan 393, and phenylalanine 425–glycine 445.

Belongs to the UbiA prenyltransferase family. Forms ~370 kDa homooligomeric complexes.

It is found in the mitochondrion. Its subcellular location is the mitochondrion membrane. It catalyses the reaction heme b + (2E,6E)-farnesyl diphosphate + H2O = Fe(II)-heme o + diphosphate. The protein operates within porphyrin-containing compound metabolism; heme O biosynthesis; heme O from protoheme: step 1/1. Its activity is regulated as follows. Positively regulated by the hydroxylated intermediate (heme I) formed at the subsequent step, or by HAS/COX15 itself. In terms of biological role, catalyzes the first reaction in the biosynthesis of heme A, a prosthetic group of mitochondrial cytochrome c oxidase (CcO). Heme A is synthesized from heme B by two sequential enzymatic reactions catalyzed by heme O synthase (HOS/COX10) and heme A synthase (HAS/COX15). HOS converts heme B (protoheme IX) to heme O by substitution of the vinyl group on carbon 2 of heme B porphyrin ring with a hydroxyethyl farnesyl side group. This is Protoheme IX farnesyltransferase, mitochondrial (COX10) from Saccharomyces cerevisiae (strain ATCC 204508 / S288c) (Baker's yeast).